A 362-amino-acid polypeptide reads, in one-letter code: Dihydroorotate dehydrogenase (quinone) (362 aa).

FMN contacts are provided by residues 62 to 66 (AGYDK) and threonine 86. Lysine 66 contacts substrate. 111 to 115 (NRLGF) lines the substrate pocket. The FMN site is built by asparagine 139 and asparagine 170. Substrate is bound at residue asparagine 170. Catalysis depends on serine 173, which acts as the Nucleophile. Asparagine 175 contributes to the substrate binding site. Residues lysine 215 and serine 243 each contribute to the FMN site. 244 to 245 (NT) contacts substrate. FMN is bound by residues glycine 266, glycine 295, and 316–317 (YS).

It belongs to the dihydroorotate dehydrogenase family. Type 2 subfamily. As to quaternary structure, monomer. FMN is required as a cofactor.

It is found in the cell membrane. It catalyses the reaction (S)-dihydroorotate + a quinone = orotate + a quinol. The protein operates within pyrimidine metabolism; UMP biosynthesis via de novo pathway; orotate from (S)-dihydroorotate (quinone route): step 1/1. In terms of biological role, catalyzes the conversion of dihydroorotate to orotate with quinone as electron acceptor. The sequence is that of Dihydroorotate dehydrogenase (quinone) from Rhizobium rhizogenes (strain K84 / ATCC BAA-868) (Agrobacterium radiobacter).